Consider the following 577-residue polypeptide: DNA-directed RNA polymerase subunit alpha (577 aa).

The interval 1-461 (MIKIIIKETF…QLFLPLQQIR (461 aa)) is alpha N-terminal domain (alpha-NTD). An alpha C-terminal domain (alpha-CTD) region spans residues 510-577 (FDHRLLELDI…ALQLMKLTLK (68 aa)).

It belongs to the RNA polymerase alpha chain family. As to quaternary structure, in plastids the minimal PEP RNA polymerase catalytic core is composed of four subunits: alpha, beta, beta', and beta''. When a (nuclear-encoded) sigma factor is associated with the core the holoenzyme is formed, which can initiate transcription.

It localises to the plastid. The protein localises to the chloroplast. It carries out the reaction RNA(n) + a ribonucleoside 5'-triphosphate = RNA(n+1) + diphosphate. In terms of biological role, DNA-dependent RNA polymerase catalyzes the transcription of DNA into RNA using the four ribonucleoside triphosphates as substrates. This Tupiella akineta (Green alga) protein is DNA-directed RNA polymerase subunit alpha.